The sequence spans 577 residues: External alternative NAD(P)H-ubiquinone oxidoreductase B1, mitochondrial (577 aa).

A mitochondrion-targeting transit peptide spans 1-35 (MRGFTYLSKVLHSHSSYSKLLVLCSVSTGGLLVYA). 57-87 (RVVVLGTGWGGTSFLKDVDISSYDVQVVSPR) contacts FAD. 221–257 (LHFVIVGGGPTGVEFAAELHDYVYEDLVKIYPSVKDF) contacts NAD(+). One can recognise an EF-hand domain in the interval 378 to 413 (KVMEDISAIFKAADKDDSGTLSIEEFRDVLEDIIIR). 5 residues coordinate Ca(2+): Asp-391, Asp-393, Ser-395, Thr-397, and Glu-402. A Microbody targeting signal motif is present at residues 568–577 (YIFGRDSSRI).

It belongs to the NADH dehydrogenase family. FAD is required as a cofactor.

The protein resides in the mitochondrion inner membrane. It localises to the peroxisome. The catalysed reaction is a quinone + NADH + H(+) = a quinol + NAD(+). It catalyses the reaction a ubiquinone + NADH + H(+) = a ubiquinol + NAD(+). Activity is calcium-dependent with a more pronounced effect at higher pH. Its function is as follows. Alternative NADH-ubiquinone oxidoreductase which catalyzes the oxidation of mitochondrial NADH does not translocate protons across the inner mitochondrial membrane. Calcium-dependent NAD(P)H dehydrogenase. Binds calcium ions. This chain is External alternative NAD(P)H-ubiquinone oxidoreductase B1, mitochondrial (NDB1), found in Solanum tuberosum (Potato).